The sequence spans 692 residues: Putative clathrin assembly protein At1g14910 (692 aa).

The region spanning 24–161 (RVNSDYAELD…ECFRVLKYDI (138 aa)) is the ENTH domain. The disordered stretch occupies residues 325 to 383 (YTPDDGLTSEDVGPSHEEHETSSPSDSAVVPSEETQLSSQSPPSVETPQNFIDTDDLLG). Positions 357 to 376 (EETQLSSQSPPSVETPQNFI) are enriched in polar residues. S363 is subject to Phosphoserine. Residues 532–548 (FGEFPIVPVSEPQSTTS) form repeat 1. The segment at 532–666 (FGEFPIVPVS…PVSEPQNTTG (135 aa)) is 8 X 17 AA approximate tandem repeats. The stretch at 549–564 (FGAFPVPVSEPSNTTG) is one 2; truncated repeat. 6 repeat units span residues 565-581 (FGEI…NTTA), 582-598 (FGEF…NITG), 599-615 (FGAL…NTTG), 616-632 (FGEF…NTTG), 633-649 (FGAL…KTTG), and 650-666 (LGEF…NTTG).

As to expression, expressed in the whole plant.

The protein resides in the membrane. The protein localises to the clathrin-coated pit. It localises to the golgi apparatus. It is found in the cytoplasmic vesicle. Its subcellular location is the clathrin-coated vesicle. This is Putative clathrin assembly protein At1g14910 from Arabidopsis thaliana (Mouse-ear cress).